The chain runs to 363 residues: Histidinol-phosphate aminotransferase (363 aa).

Residue Lys218 is modified to N6-(pyridoxal phosphate)lysine.

Belongs to the class-II pyridoxal-phosphate-dependent aminotransferase family. Histidinol-phosphate aminotransferase subfamily. As to quaternary structure, homodimer. Requires pyridoxal 5'-phosphate as cofactor.

It carries out the reaction L-histidinol phosphate + 2-oxoglutarate = 3-(imidazol-4-yl)-2-oxopropyl phosphate + L-glutamate. It functions in the pathway amino-acid biosynthesis; L-histidine biosynthesis; L-histidine from 5-phospho-alpha-D-ribose 1-diphosphate: step 7/9. The sequence is that of Histidinol-phosphate aminotransferase from Xanthomonas euvesicatoria pv. vesicatoria (strain 85-10) (Xanthomonas campestris pv. vesicatoria).